The primary structure comprises 158 residues: Endoribonuclease YbeY (158 aa).

Zn(2+) is bound by residues His119, His123, and His129.

Belongs to the endoribonuclease YbeY family. Zn(2+) is required as a cofactor.

The protein resides in the cytoplasm. Functionally, single strand-specific metallo-endoribonuclease involved in late-stage 70S ribosome quality control and in maturation of the 3' terminus of the 16S rRNA. In Acinetobacter baumannii (strain SDF), this protein is Endoribonuclease YbeY.